Here is a 571-residue protein sequence, read N- to C-terminus: Membrane protein insertase YidC (571 aa).

The helical transmembrane segment at 4–24 threads the bilayer; the sequence is TRVFLIFAWLMVAVLLWMEWS. A disordered region spans residues 29–76; that stretch reads APTPAPTTTSAPAAAQSVPGATPGSVPNAQVPGAPGQAAVQAQASATP. Low complexity-rich tracts occupy residues 34–43 and 57–76; these read PTTTSAPAAA and AQVPGAPGQAAVQAQASATP. The next 4 membrane-spanning stretches (helical) occupy residues 369–389, 440–460, 483–503, and 518–538; these read LVGNWGWAIVGLVVLLKLVLY, GGCLPILIQMPIFFALYWVLV, YFILPVINVAVMWFTQKLTPA, and PLVFGVMMAFMPSGLVLYWVV.

This sequence belongs to the OXA1/ALB3/YidC family. Type 1 subfamily. Interacts with the Sec translocase complex via SecD. Specifically interacts with transmembrane segments of nascent integral membrane proteins during membrane integration.

It localises to the cell inner membrane. Functionally, required for the insertion and/or proper folding and/or complex formation of integral membrane proteins into the membrane. Involved in integration of membrane proteins that insert both dependently and independently of the Sec translocase complex, as well as at least some lipoproteins. Aids folding of multispanning membrane proteins. The protein is Membrane protein insertase YidC of Stenotrophomonas maltophilia (strain R551-3).